Consider the following 479-residue polypeptide: MSTATATGRVTQVIGSTFDAEFPEGQLPKIYNALTIQSEHKGVTIDLTGEVQQHLGGGRVRAIALGSTEGMMRGMNVVDTGKPVSVPVGKATLGRVFNVLGQPIDKRGDVQADDYWPIHRQAPPVNELSTNTELFETGIKVVDLLTPFVRGGKAGLFGGAGLGKTVILTELIARIASSHGGYSVFAGVGERTREGTDLWLEMQETEIGSTGRNVIEQTCMVFGQMNEPPGSRLRVALSALTMAEYFRDTTGADTLLFVDNIFRFSQAGSEVSALLGRMPSAVGYQPTLATEMGALQERITSTKQGAITSVQAVYVPADDPTDPAPATAFGQLDAFIYLERSISEKGIYPAIDPLASNSRILDPQYVGDRHYTIARRVQTILQRYRELQDIIAILGVDELSEEDKTIVHRARRIERFLSQPFLVAEVFIGKPGEITSLEDTIRSFEGICDGKYDHLPEQAFMYVGAIEQAEEQAKKMESK.

158–165 (GGAGLGKT) is an ATP binding site.

Belongs to the ATPase alpha/beta chains family. F-type ATPases have 2 components, CF(1) - the catalytic core - and CF(0) - the membrane proton channel. CF(1) has five subunits: alpha(3), beta(3), gamma(1), delta(1), epsilon(1). CF(0) has three main subunits: a(1), b(2) and c(9-12). The alpha and beta chains form an alternating ring which encloses part of the gamma chain. CF(1) is attached to CF(0) by a central stalk formed by the gamma and epsilon chains, while a peripheral stalk is formed by the delta and b chains.

Its subcellular location is the cell inner membrane. It carries out the reaction ATP + H2O + 4 H(+)(in) = ADP + phosphate + 5 H(+)(out). Produces ATP from ADP in the presence of a proton gradient across the membrane. The catalytic sites are hosted primarily by the beta subunits. The polypeptide is ATP synthase subunit beta (Rhodopirellula baltica (strain DSM 10527 / NCIMB 13988 / SH1)).